A 50-amino-acid chain; its full sequence is Large ribosomal subunit protein eL40 (50 aa).

The protein belongs to the eukaryotic ribosomal protein eL40 family.

The sequence is that of Large ribosomal subunit protein eL40 from Aeropyrum pernix (strain ATCC 700893 / DSM 11879 / JCM 9820 / NBRC 100138 / K1).